We begin with the raw amino-acid sequence, 728 residues long: Probable ubiquitin-conjugating enzyme protein 17 (728 aa).

A compositionally biased stretch (low complexity) spans 1-17 (MSSQASQRSSSTSAVAQ). 2 disordered regions span residues 1 to 23 (MSSQ…RERR) and 123 to 155 (SSRS…GSTR). The UBC core domain occupies 402 to 568 (DRTKRIAKEL…IEHATLNYAI (167 aa)). Residue C495 is the Glycyl thioester intermediate of the active site. 2 disordered regions span residues 649–678 (PFAK…EAAA) and 709–728 (RTQP…STSS). The span at 658 to 678 (SERLKREQSEKEEKQKKEAAA) shows a compositional bias: basic and acidic residues. A compositionally biased stretch (polar residues) spans 710 to 728 (TQPTGDYSVPSVNEPSTSS).

The protein belongs to the ubiquitin-conjugating enzyme family.

This Caenorhabditis elegans protein is Probable ubiquitin-conjugating enzyme protein 17 (ubc-17).